A 307-amino-acid chain; its full sequence is Porphobilinogen deaminase (307 aa).

Cysteine 241 carries the S-(dipyrrolylmethanemethyl)cysteine modification.

Belongs to the HMBS family. Monomer. The cofactor is dipyrromethane.

It catalyses the reaction 4 porphobilinogen + H2O = hydroxymethylbilane + 4 NH4(+). The protein operates within porphyrin-containing compound metabolism; protoporphyrin-IX biosynthesis; coproporphyrinogen-III from 5-aminolevulinate: step 2/4. In terms of biological role, tetrapolymerization of the monopyrrole PBG into the hydroxymethylbilane pre-uroporphyrinogen in several discrete steps. This Coxiella burnetii (strain RSA 331 / Henzerling II) protein is Porphobilinogen deaminase.